The sequence spans 309 residues: Probable RuBisCO transcriptional regulator (309 aa).

The 58-residue stretch at 6 to 63 (FTLDQLRILKAIVKEGSFKRAADSLYVSQPAISLQIQNLEKQLNIPLFERSNKKATLT) folds into the HTH lysR-type domain. Positions 23–42 (FKRAADSLYVSQPAISLQIQ) form a DNA-binding region, H-T-H motif.

The protein belongs to the LysR transcriptional regulatory family.

It is found in the plastid. The protein resides in the chloroplast. Trans-acting transcriptional regulator of RuBisCO genes (rbcL and rbcS) expression. In Gracilaria tenuistipitata var. liui (Red alga), this protein is Probable RuBisCO transcriptional regulator (rbcR).